Here is a 32-residue protein sequence, read N- to C-terminus: Turripeptide XIV-18 (32 aa).

The residue at position 30 (isoleucine 30) is an Isoleucine amide.

Post-translationally, contains 2 disulfide bonds. Expressed by the venom duct.

Its subcellular location is the secreted. The protein is Turripeptide XIV-18 of Gemmula speciosa (Splendid gem-turris).